Consider the following 428-residue polypeptide: Glucose-1-phosphate adenylyltransferase (428 aa).

Alpha-D-glucose 1-phosphate is bound by residues Tyr-114, Gly-179, 194–195, and Ser-212; that span reads EK.

Belongs to the bacterial/plant glucose-1-phosphate adenylyltransferase family. Homotetramer.

It carries out the reaction alpha-D-glucose 1-phosphate + ATP + H(+) = ADP-alpha-D-glucose + diphosphate. The protein operates within glycan biosynthesis; glycogen biosynthesis. In terms of biological role, involved in the biosynthesis of ADP-glucose, a building block required for the elongation reactions to produce glycogen. Catalyzes the reaction between ATP and alpha-D-glucose 1-phosphate (G1P) to produce pyrophosphate and ADP-Glc. The polypeptide is Glucose-1-phosphate adenylyltransferase (Yersinia pseudotuberculosis serotype IB (strain PB1/+)).